Reading from the N-terminus, the 406-residue chain is Peptidase T (406 aa).

A Zn(2+)-binding site is contributed by H80. D82 is an active-site residue. D141 is a Zn(2+) binding site. Residue E175 is the Proton acceptor of the active site. Zn(2+) contacts are provided by E176, D198, and H380.

It belongs to the peptidase M20B family. Zn(2+) is required as a cofactor.

It is found in the cytoplasm. It carries out the reaction Release of the N-terminal residue from a tripeptide.. In terms of biological role, cleaves the N-terminal amino acid of tripeptides. This is Peptidase T from Streptococcus mutans serotype c (strain ATCC 700610 / UA159).